The sequence spans 359 residues: DNA polymerase IV (359 aa).

A UmuC domain is found at 4–185 (IIHIDMDCYF…LSLRKIPGVG (182 aa)). Mg(2+) contacts are provided by D8 and D103. E104 is an active-site residue.

It belongs to the DNA polymerase type-Y family. As to quaternary structure, monomer. Mg(2+) serves as cofactor.

It localises to the cytoplasm. The catalysed reaction is DNA(n) + a 2'-deoxyribonucleoside 5'-triphosphate = DNA(n+1) + diphosphate. Poorly processive, error-prone DNA polymerase involved in untargeted mutagenesis. Copies undamaged DNA at stalled replication forks, which arise in vivo from mismatched or misaligned primer ends. These misaligned primers can be extended by PolIV. Exhibits no 3'-5' exonuclease (proofreading) activity. May be involved in translesional synthesis, in conjunction with the beta clamp from PolIII. This is DNA polymerase IV from Shewanella sp. (strain MR-4).